The sequence spans 373 residues: Putative zinc finger protein 012R (373 aa).

The C2H2-type zinc finger occupies 2–29; it reads FECTHCDLHFESKSKLATHQKTKKCTAH.

Belongs to the IIV-6 302L family.

The protein is Putative zinc finger protein 012R of Invertebrate iridescent virus 3 (IIV-3).